A 532-amino-acid chain; its full sequence is Bifunctional purine biosynthesis protein PurH (532 aa).

An MGS-like domain is found at 1–149 (MTDPAPLTRA…KNHGAVTVLT (149 aa)).

This sequence belongs to the PurH family.

The catalysed reaction is (6R)-10-formyltetrahydrofolate + 5-amino-1-(5-phospho-beta-D-ribosyl)imidazole-4-carboxamide = 5-formamido-1-(5-phospho-D-ribosyl)imidazole-4-carboxamide + (6S)-5,6,7,8-tetrahydrofolate. It carries out the reaction IMP + H2O = 5-formamido-1-(5-phospho-D-ribosyl)imidazole-4-carboxamide. It participates in purine metabolism; IMP biosynthesis via de novo pathway; 5-formamido-1-(5-phospho-D-ribosyl)imidazole-4-carboxamide from 5-amino-1-(5-phospho-D-ribosyl)imidazole-4-carboxamide (10-formyl THF route): step 1/1. It functions in the pathway purine metabolism; IMP biosynthesis via de novo pathway; IMP from 5-formamido-1-(5-phospho-D-ribosyl)imidazole-4-carboxamide: step 1/1. This chain is Bifunctional purine biosynthesis protein PurH, found in Jannaschia sp. (strain CCS1).